A 492-amino-acid chain; its full sequence is N-succinylglutamate 5-semialdehyde dehydrogenase (492 aa).

Residue G220–G225 coordinates NAD(+). Residues E243 and C277 contribute to the active site.

Belongs to the aldehyde dehydrogenase family. AstD subfamily.

It carries out the reaction N-succinyl-L-glutamate 5-semialdehyde + NAD(+) + H2O = N-succinyl-L-glutamate + NADH + 2 H(+). Its pathway is amino-acid degradation; L-arginine degradation via AST pathway; L-glutamate and succinate from L-arginine: step 4/5. Functionally, catalyzes the NAD-dependent reduction of succinylglutamate semialdehyde into succinylglutamate. The chain is N-succinylglutamate 5-semialdehyde dehydrogenase from Cronobacter sakazakii (strain ATCC BAA-894) (Enterobacter sakazakii).